The primary structure comprises 235 residues: uncharacterized protein (235 aa).

This is an uncharacterized protein from Bacillus subtilis (strain 168).